Consider the following 274-residue polypeptide: Aquaporin C (274 aa).

Residues 1 to 33 lie on the Cytoplasmic side of the membrane; sequence MPFLHLFTPYTNADNTKLILRVNESRLRLFTRQ. A helical transmembrane segment spans residues 34-54; sequence LLAEFFGTLFVVYIVSGSTLA. Residues 55 to 66 are Extracellular-facing; that stretch reads ANFAVSDPIVRV. A helical transmembrane segment spans residues 67-87; sequence CLICLVQGFAFAAIIWSISGI. Over 88–105 the chain is Cytoplasmic; the sequence is SGCQLNPAVTVGCVTTGR. Residues 93-95 carry the NPA 1 motif; the sequence is NPA. A helical transmembrane segment spans residues 106 to 126; sequence MGILNGIAFIIFQCVGALVGA. Topologically, residues 127-154 are extracellular; the sequence is GMMKASLPTFYERDLSATTLATGVNVAR. Residues 155-175 traverse the membrane as a helical segment; it reads GFFLEMVTTSFLVFVVLGVAV. Residues 176-185 lie on the Cytoplasmic side of the membrane; that stretch reads YNEWDPKISR. Residues 186-206 form a helical membrane-spanning segment; sequence VAPLAIGCAVIAGVGFLNLFT. Residues 207–229 lie on the Extracellular side of the membrane; it reads GGSLNPARSFGPAVFSDTWHRHY. The NPA 2 motif lies at 211–213; it reads NPA. A helical transmembrane segment spans residues 230–250; the sequence is IYWFGPICGGIIAGLFWRIFL. The Cytoplasmic segment spans residues 251–274; it reads SEKVLLIDRPYTDFHRSTYGTATK.

The protein belongs to the MIP/aquaporin (TC 1.A.8) family.

The protein localises to the cell membrane. In terms of biological role, may form a water-specific channel. In Dictyostelium discoideum (Social amoeba), this protein is Aquaporin C (wacA).